Consider the following 205-residue polypeptide: MIGRLRGIVLEKQPPLVLLETNGVGYEVHMPMTCFYELPDAGQEAVLFTHFVVREDAQLLYGFNDKQERALFRELIKVNGVGPKLALAILSGMSAQQFVSAIEREAIVSLVKLPGVGKKTAERLVVEMKDRFKGLNGDLFNQSSDINLPATAKQTTSDADSEAEAAAALVSLGYKPQEASRMVSKIAKPGADCETLIREALRAVL.

The interval 1-64 (MIGRLRGIVL…EDAQLLYGFN (64 aa)) is domain I. The domain II stretch occupies residues 65-143 (DKQERALFRE…GLNGDLFNQS (79 aa)). The interval 144–156 (SDINLPATAKQTT) is flexible linker. Positions 157-205 (SDADSEAEAAAALVSLGYKPQEASRMVSKIAKPGADCETLIREALRAVL) are domain III.

Belongs to the RuvA family. Homotetramer. Forms an RuvA(8)-RuvB(12)-Holliday junction (HJ) complex. HJ DNA is sandwiched between 2 RuvA tetramers; dsDNA enters through RuvA and exits via RuvB. An RuvB hexamer assembles on each DNA strand where it exits the tetramer. Each RuvB hexamer is contacted by two RuvA subunits (via domain III) on 2 adjacent RuvB subunits; this complex drives branch migration. In the full resolvosome a probable DNA-RuvA(4)-RuvB(12)-RuvC(2) complex forms which resolves the HJ.

The protein resides in the cytoplasm. Functionally, the RuvA-RuvB-RuvC complex processes Holliday junction (HJ) DNA during genetic recombination and DNA repair, while the RuvA-RuvB complex plays an important role in the rescue of blocked DNA replication forks via replication fork reversal (RFR). RuvA specifically binds to HJ cruciform DNA, conferring on it an open structure. The RuvB hexamer acts as an ATP-dependent pump, pulling dsDNA into and through the RuvAB complex. HJ branch migration allows RuvC to scan DNA until it finds its consensus sequence, where it cleaves and resolves the cruciform DNA. This is Holliday junction branch migration complex subunit RuvA from Photorhabdus laumondii subsp. laumondii (strain DSM 15139 / CIP 105565 / TT01) (Photorhabdus luminescens subsp. laumondii).